A 509-amino-acid polypeptide reads, in one-letter code: Dihydrolipoyl dehydrogenase, mitochondrial (509 aa).

The N-terminal 35 residues, 1–35 (MQSWSRVYCSLAKRGHFNRISHGLQGLSAVPLRTY), are a transit peptide targeting the mitochondrion. K66 carries the N6-acetyllysine; alternate modification. N6-succinyllysine; alternate is present on K66. FAD contacts are provided by residues 71-80 (EKNETLGGTC) and K89. Cysteines 80 and 85 form a disulfide. K104, K122, K132, and K143 each carry N6-acetyllysine; alternate. An N6-succinyllysine; alternate mark is found at K104, K122, K132, and K143. G154 provides a ligand contact to FAD. An N6-succinyllysine mark is found at K159 and K166. FAD is bound at residue 183–185 (TGS). Residues 220 to 227 (GAGVIGVE) and E243 each bind NAD(+). N6-succinyllysine occurs at positions 273 and 277. V278 is a binding site for NAD(+). Residues S285 and S297 each carry the phosphoserine modification. Residue G314 participates in NAD(+) binding. An N6-acetyllysine modification is found at K346. Residues D355 and 361-364 (MLAH) each bind FAD. K410 bears the N6-acetyllysine; alternate mark. K410 is modified (N6-succinyllysine; alternate). N6-acetyllysine is present on residues K417 and K420. Position 430 is an N6-succinyllysine (K430). The active-site Proton acceptor is the H487. Residue S502 is modified to Phosphoserine. An N6-acetyllysine; alternate modification is found at K505. Residue K505 is modified to N6-succinyllysine; alternate.

Belongs to the class-I pyridine nucleotide-disulfide oxidoreductase family. As to quaternary structure, homodimer. Part of the multimeric pyruvate dehydrogenase complex that contains multiple copies of pyruvate dehydrogenase (subunits PDHA (PDHA1 or PDHA2) and PDHB, E1), dihydrolipoamide acetyltransferase (DLAT, E2) and lipoamide dehydrogenase (DLD, E3). These subunits are bound to an inner core composed of about 48 DLAT and 12 PDHX molecules (by non covalent bonds). The 2-oxoglutarate dehydrogenase complex is composed of OGDH (2-oxoglutarate dehydrogenase; E1), DLST (dihydrolipoamide succinyltransferase; E2), DLD (dihydrolipoamide dehydrogenase; E3) and the assembly factor KGD4. It contains multiple copies of the three enzymatic components (E1, E2 and E3). In the nucleus, the 2-oxoglutarate dehydrogenase complex associates with KAT2A. Interacts with PDHX. FAD serves as cofactor. Tyrosine phosphorylated.

It localises to the mitochondrion matrix. It is found in the nucleus. The protein resides in the cell projection. The protein localises to the cilium. Its subcellular location is the flagellum. It localises to the cytoplasmic vesicle. It is found in the secretory vesicle. The protein resides in the acrosome. The enzyme catalyses N(6)-[(R)-dihydrolipoyl]-L-lysyl-[protein] + NAD(+) = N(6)-[(R)-lipoyl]-L-lysyl-[protein] + NADH + H(+). Disruption of native heterodimer state inhibits primary dihydrolipoamide dehydrogenase activity and induces serine protease activity. Lipoamide dehydrogenase is a component of the glycine cleavage system as well as an E3 component of three alpha-ketoacid dehydrogenase complexes (pyruvate-, alpha-ketoglutarate-, and branched-chain amino acid-dehydrogenase complex). The 2-oxoglutarate dehydrogenase complex is mainly active in the mitochondrion. A fraction of the 2-oxoglutarate dehydrogenase complex also localizes in the nucleus and is required for lysine succinylation of histones: associates with KAT2A on chromatin and provides succinyl-CoA to histone succinyltransferase KAT2A. In monomeric form may have additional moonlighting function as serine protease. Involved in the hyperactivation of spermatazoa during capacitation and in the spermatazoal acrosome reaction. This Homo sapiens (Human) protein is Dihydrolipoyl dehydrogenase, mitochondrial (DLD).